The sequence spans 105 residues: Intermembrane phospholipid transport system binding protein MlaB (105 aa).

The STAS domain maps to 4-105 (WDLQKNNDKI…GLSDWIANFI (102 aa)).

In terms of assembly, the complex is composed of two ATP-binding proteins (MlaF), two transmembrane proteins (MlaE), two cytoplasmic solute-binding proteins (MlaB) and six periplasmic solute-binding proteins (MlaD).

The protein resides in the cytoplasm. In terms of biological role, part of the ABC transporter complex MlaFEDB, which is involved in a phospholipid transport pathway that maintains lipid asymmetry in the outer membrane by retrograde trafficking of phospholipids from the outer membrane to the inner membrane. MlaB plays critical roles in both the assembly and activity of the complex. May act by modulating MlaF structure and stability. The polypeptide is Intermembrane phospholipid transport system binding protein MlaB (Haemophilus influenzae (strain ATCC 51907 / DSM 11121 / KW20 / Rd)).